The primary structure comprises 207 residues: Ribosomal RNA small subunit methyltransferase G (207 aa).

S-adenosyl-L-methionine is bound by residues Gly73, Leu78, 124-125 (VE), and Arg139.

It belongs to the methyltransferase superfamily. RNA methyltransferase RsmG family.

It is found in the cytoplasm. The enzyme catalyses guanosine(527) in 16S rRNA + S-adenosyl-L-methionine = N(7)-methylguanosine(527) in 16S rRNA + S-adenosyl-L-homocysteine. Its function is as follows. Specifically methylates the N7 position of guanine in position 527 of 16S rRNA. This Salmonella agona (strain SL483) protein is Ribosomal RNA small subunit methyltransferase G.